The primary structure comprises 352 residues: Dolichol-phosphate mannosyltransferase (352 aa).

Residues 1 to 229 (MKVSVIIPTY…HIYRLMKWEG (229 aa)) lie on the Cytoplasmic side of the membrane. The GDP-alpha-D-mannose site is built by proline 8, tyrosine 10, glutamate 12, valine 37, aspartate 39, aspartate 89, alanine 90, aspartate 91, glutamine 93, arginine 117, valine 156, lysine 178, arginine 202, and lysine 208. The Mg(2+) site is built by aspartate 91 and glutamine 93. Mn(2+) contacts are provided by aspartate 91 and glutamine 93. A helical membrane pass occupies residues 230–256 (EIDRIVKFSIVGLSGILVNEGFLWLFV). The Extracellular portion of the chain corresponds to 257-261 (NLGIP). A helical transmembrane segment spans residues 262–286 (KEIAVIPAVELSILNNFFWNDIWTF). The Cytoplasmic segment spans residues 287-293 (KDIRRGS). The helical transmembrane segment at 294-320 (IFSRLLKFHIAALSGAVVNFIVYWILL) threads the bilayer. Topologically, residues 321–325 (FLGIH) are extracellular. The chain crosses the membrane as a helical span at residues 326–350 (YLIANLVGIVLSFGVRYVINRHVTW). The Cytoplasmic segment spans residues 351–352 (AT).

This sequence belongs to the glycosyltransferase 2 family. The cofactor is Mg(2+). Mn(2+) is required as a cofactor. Requires Ca(2+) as cofactor.

The protein localises to the cell membrane. The enzyme catalyses a di-trans,poly-cis-dolichyl phosphate + GDP-alpha-D-mannose = a di-trans,poly-cis-dolichyl beta-D-mannosyl phosphate + GDP. Its pathway is protein modification; protein glycosylation. In terms of biological role, transfers mannose from GDP-mannose to dolichol monophosphate to form dolichol phosphate mannose (Dol-P-Man) which is the mannosyl donor in pathways leading to N-glycosylation, glycosyl phosphatidylinositol membrane anchoring, and O-mannosylation of proteins. This chain is Dolichol-phosphate mannosyltransferase, found in Pyrococcus furiosus (strain ATCC 43587 / DSM 3638 / JCM 8422 / Vc1).